The following is a 577-amino-acid chain: CTP synthase (577 aa).

The tract at residues 1 to 268 is amidoligase domain; the sequence is MDPAFIFITG…GALLCERLRL (268 aa). S14 contacts CTP. S14 provides a ligand contact to UTP. 15 to 20 contacts ATP; sequence SLGKGI. Y55 serves as a coordination point for L-glutamine. Residue D72 participates in ATP binding. Mg(2+) is bound by residues D72 and E142. CTP-binding positions include 149–151, 189–194, and K225; these read DIE and KTKPLQ. UTP contacts are provided by residues 189–194 and K225; that span reads KTKPLQ. Positions 333-575 constitute a Glutamine amidotransferase type-1 domain; the sequence is TVALVGKYVS…VAAGLERKDS (243 aa). G396 provides a ligand contact to L-glutamine. Catalysis depends on C423, which acts as the Nucleophile; for glutamine hydrolysis. L-glutamine-binding positions include 424–427, E447, and R503; that span reads LGMQ. Residues H548 and E550 contribute to the active site.

The protein belongs to the CTP synthase family. As to quaternary structure, homotetramer.

The enzyme catalyses UTP + L-glutamine + ATP + H2O = CTP + L-glutamate + ADP + phosphate + 2 H(+). The catalysed reaction is L-glutamine + H2O = L-glutamate + NH4(+). It carries out the reaction UTP + NH4(+) + ATP = CTP + ADP + phosphate + 2 H(+). The protein operates within pyrimidine metabolism; CTP biosynthesis via de novo pathway; CTP from UDP: step 2/2. Its activity is regulated as follows. Allosterically activated by GTP, when glutamine is the substrate; GTP has no effect on the reaction when ammonia is the substrate. The allosteric effector GTP functions by stabilizing the protein conformation that binds the tetrahedral intermediate(s) formed during glutamine hydrolysis. Inhibited by the product CTP, via allosteric rather than competitive inhibition. Functionally, catalyzes the ATP-dependent amination of UTP to CTP with either L-glutamine or ammonia as the source of nitrogen. Regulates intracellular CTP levels through interactions with the four ribonucleotide triphosphates. The sequence is that of CTP synthase from Treponema pallidum (strain Nichols).